The primary structure comprises 185 residues: Ribosome-recycling factor (185 aa).

It belongs to the RRF family.

The protein localises to the cytoplasm. In terms of biological role, responsible for the release of ribosomes from messenger RNA at the termination of protein biosynthesis. May increase the efficiency of translation by recycling ribosomes from one round of translation to another. This chain is Ribosome-recycling factor, found in Edwardsiella ictaluri (strain 93-146).